The following is a 746-amino-acid chain: Protein psiN (746 aa).

The first 23 residues, 1–23 (MGNINKKLFYFLIQLITILIVLS), serve as a signal peptide directing secretion. Residues 24–679 (DDSYNSLLPL…KCQSAAVKAA (656 aa)) lie on the Extracellular side of the membrane. Residues Asn97 and Asn124 are each glycosylated (N-linked (GlcNAc...) asparagine). The 152-residue stretch at 125-276 (VTSDDPRIYS…YDYCGVCEGM (152 aa)) folds into the PA14 domain. Residues Asn319, Asn353, Asn380, Asn477, Asn553, Asn628, and Asn654 are each glycosylated (N-linked (GlcNAc...) asparagine). Residues 680-700 (VGVGAGAAAGIAIGGAIALGL) form a helical membrane-spanning segment. The Cytoplasmic segment spans residues 701–746 (AAFGGKRGYDAWKSSRDNQIQTSSENPLYNPNPNQGDNPLYAANNS). Positions 714–746 (SSRDNQIQTSSENPLYNPNPNQGDNPLYAANNS) are disordered. The segment covering 717–746 (DNQIQTSSENPLYNPNPNQGDNPLYAANNS) has biased composition (polar residues).

Belongs to the prespore-cell-inducing factor family.

The protein localises to the membrane. This Dictyostelium discoideum (Social amoeba) protein is Protein psiN (psiN).